We begin with the raw amino-acid sequence, 82 residues long: MEVKPLANIKSAIKRAELNVKQNEKNSAQKSAMRTAIKAFEANPSEELFRAASSAIDKAETKGLIHKNKASRDKARLASKLA.

The protein belongs to the bacterial ribosomal protein bS20 family.

Binds directly to 16S ribosomal RNA. The protein is Small ribosomal subunit protein bS20 of Streptococcus suis (strain 98HAH33).